Here is a 188-residue protein sequence, read N- to C-terminus: GTP cyclohydrolase 1 (188 aa).

Zn(2+) contacts are provided by Cys-78, His-81, and Cys-150.

Belongs to the GTP cyclohydrolase I family. Toroid-shaped homodecamer, composed of two pentamers of five dimers.

The enzyme catalyses GTP + H2O = 7,8-dihydroneopterin 3'-triphosphate + formate + H(+). It participates in cofactor biosynthesis; 7,8-dihydroneopterin triphosphate biosynthesis; 7,8-dihydroneopterin triphosphate from GTP: step 1/1. The protein is GTP cyclohydrolase 1 of Halalkalibacterium halodurans (strain ATCC BAA-125 / DSM 18197 / FERM 7344 / JCM 9153 / C-125) (Bacillus halodurans).